The following is a 507-amino-acid chain: Interleukin-17 receptor E-like protein (507 aa).

Residues 1 to 21 (MLAGQALAFLGLTWGTFQSLA) form the signal peptide.

It localises to the secreted. In Homo sapiens (Human), this protein is Interleukin-17 receptor E-like protein.